A 1728-amino-acid chain; its full sequence is U3 small nucleolar RNA-associated protein 10 (1728 aa).

7 HEAT repeats span residues 540 to 578 (DKDF…LVKE), 881 to 926 (PANH…MMPA), 986 to 1024 (FMGS…AYEH), 1191 to 1229 (LLSI…SEST), 1235 to 1274 (REAL…KYGK), 1622 to 1662 (ADAT…GQAA), and 1683 to 1721 (LQAL…KLGE).

It belongs to the HEATR1/UTP10 family. As to quaternary structure, component of the ribosomal small subunit (SSU) processome.

It is found in the nucleus. The protein resides in the nucleolus. Its function is as follows. Involved in nucleolar processing of pre-18S ribosomal RNA. Involved in ribosome biosynthesis. In Chaetomium globosum (strain ATCC 6205 / CBS 148.51 / DSM 1962 / NBRC 6347 / NRRL 1970) (Soil fungus), this protein is U3 small nucleolar RNA-associated protein 10.